A 149-amino-acid polypeptide reads, in one-letter code: Ribosomal RNA large subunit methyltransferase H (149 aa).

Residues Leu-71, Gly-98, and 117–122 contribute to the S-adenosyl-L-methionine site; that span reads LSKLTL.

It belongs to the RNA methyltransferase RlmH family. As to quaternary structure, homodimer.

It localises to the cytoplasm. It carries out the reaction pseudouridine(1915) in 23S rRNA + S-adenosyl-L-methionine = N(3)-methylpseudouridine(1915) in 23S rRNA + S-adenosyl-L-homocysteine + H(+). In terms of biological role, specifically methylates the pseudouridine at position 1915 (m3Psi1915) in 23S rRNA. In Campylobacter jejuni subsp. jejuni serotype O:6 (strain 81116 / NCTC 11828), this protein is Ribosomal RNA large subunit methyltransferase H.